Here is a 235-residue protein sequence, read N- to C-terminus: Ribonuclease P protein component 3 (235 aa).

The protein belongs to the eukaryotic/archaeal RNase P protein component 3 family. As to quaternary structure, consists of a catalytic RNA component and at least 4-5 protein subunits.

The protein resides in the cytoplasm. The catalysed reaction is Endonucleolytic cleavage of RNA, removing 5'-extranucleotides from tRNA precursor.. In terms of biological role, part of ribonuclease P, a protein complex that generates mature tRNA molecules by cleaving their 5'-ends. The polypeptide is Ribonuclease P protein component 3 (Haloarcula marismortui (strain ATCC 43049 / DSM 3752 / JCM 8966 / VKM B-1809) (Halobacterium marismortui)).